Here is a 148-residue protein sequence, read N- to C-terminus: Prefoldin subunit alpha (148 aa).

This sequence belongs to the prefoldin subunit alpha family. In terms of assembly, heterohexamer of two alpha and four beta subunits.

Its subcellular location is the cytoplasm. In terms of biological role, molecular chaperone capable of stabilizing a range of proteins. Seems to fulfill an ATP-independent, HSP70-like function in archaeal de novo protein folding. This chain is Prefoldin subunit alpha (pfdA), found in Pyrococcus horikoshii (strain ATCC 700860 / DSM 12428 / JCM 9974 / NBRC 100139 / OT-3).